We begin with the raw amino-acid sequence, 70 residues long: V-type proton ATPase subunit e1 (70 aa).

2 helical membrane-spanning segments follow: residues 1–21 (MGFLITTLIFVVVGIIASLCV) and 36–56 (LTLVITATVCCWMMWAIVYIA).

Belongs to the V-ATPase e1/e2 subunit family. V-ATPase is a heteromultimeric enzyme composed of a peripheral catalytic V1 complex (components A to H) attached to an integral membrane V0 proton pore complex (components: a, c, c'', d and e).

Its subcellular location is the golgi apparatus. It is found in the trans-Golgi network membrane. Its function is as follows. Subunit of the integral membrane V0 complex of vacuolar ATPase. V-ATPase is responsible for acidifying a variety of intracellular compartments in eukaryotic cells. The polypeptide is V-type proton ATPase subunit e1 (VHA-e1) (Arabidopsis thaliana (Mouse-ear cress)).